A 151-amino-acid polypeptide reads, in one-letter code: Transcriptional repressor NrdR (151 aa).

A zinc finger spans residues 3 to 34 (CPYCGYEETRVLDSRVDSSGMTVRRRRECVKC). The ATP-cone domain occupies 49–139 (VFVVKKDGKR…VYKDFREIDQ (91 aa)).

This sequence belongs to the NrdR family. Requires Zn(2+) as cofactor.

In terms of biological role, negatively regulates transcription of bacterial ribonucleotide reductase nrd genes and operons by binding to NrdR-boxes. This Thermosipho melanesiensis (strain DSM 12029 / CIP 104789 / BI429) protein is Transcriptional repressor NrdR.